The chain runs to 860 residues: LPS-assembly protein LptD (860 aa).

Positions 1–21 (MTKRYFSLLAVCSAIATSTFA) are cleaved as a signal peptide.

It belongs to the LptD family. As to quaternary structure, component of the lipopolysaccharide transport and assembly complex. Interacts with LptE and LptA.

It is found in the cell outer membrane. Functionally, together with LptE, is involved in the assembly of lipopolysaccharide (LPS) at the surface of the outer membrane. This is LPS-assembly protein LptD from Saccharophagus degradans (strain 2-40 / ATCC 43961 / DSM 17024).